The sequence spans 736 residues: Prospero homeobox protein 1 (736 aa).

Residues lysine 103–aspartate 135 are compositionally biased toward polar residues. The disordered stretch occupies residues lysine 103–arginine 146. Positions arginine 163 to arginine 168 match the Nuclear localization signal motif. Disordered stretches follow at residues proline 180–serine 220, tyrosine 261–glutamate 301, glutamate 319–glycine 344, asparagine 445–glutamine 465, and proline 499–arginine 518. Over residues threonine 264–leucine 274 the composition is skewed to acidic residues. Residues glutamate 319–glutamine 335 are compositionally biased toward basic and acidic residues. Positions proline 450–histidine 460 are enriched in low complexity. A compositionally biased stretch (basic and acidic residues) spans glycine 505–arginine 518. The Prospero-type homeo domain occupies glutamine 576–methionine 634. The tract at residues glutamine 576–leucine 734 is homeo-Prospero. The Prospero domain maps to glutamate 635–leucine 734.

This sequence belongs to the Prospero homeodomain family. In terms of tissue distribution, expressed most actively in the developing lens and midgut and at lower levels in the developing brain, heart, muscle and retina.

Its subcellular location is the nucleus. Its function is as follows. Transcription factor which may be involved in developmental processes such as cell fate determination, gene transcriptional regulation and progenitor cell regulation in a number of organs. May be essential in the development and function of the eye. May play a role in the regulation of the circadian rhythm by repressing the expression of clock genes. This Gallus gallus (Chicken) protein is Prospero homeobox protein 1 (PROX1).